A 273-amino-acid chain; its full sequence is Shikimate dehydrogenase (NADP(+)) (273 aa).

Shikimate contacts are provided by residues 14–16 (SKS) and threonine 61. The active-site Proton acceptor is the lysine 65. Shikimate-binding residues include asparagine 86 and aspartate 102. Residues 126–130 (GAGGA), 150–155 (NRTVAK), and methionine 213 each bind NADP(+). Shikimate is bound at residue tyrosine 215. Glycine 237 serves as a coordination point for NADP(+).

The protein belongs to the shikimate dehydrogenase family. In terms of assembly, homodimer.

It catalyses the reaction shikimate + NADP(+) = 3-dehydroshikimate + NADPH + H(+). Its pathway is metabolic intermediate biosynthesis; chorismate biosynthesis; chorismate from D-erythrose 4-phosphate and phosphoenolpyruvate: step 4/7. In terms of biological role, involved in the biosynthesis of the chorismate, which leads to the biosynthesis of aromatic amino acids. Catalyzes the reversible NADPH linked reduction of 3-dehydroshikimate (DHSA) to yield shikimate (SA). In Tolumonas auensis (strain DSM 9187 / NBRC 110442 / TA 4), this protein is Shikimate dehydrogenase (NADP(+)).